The primary structure comprises 394 residues: Elongation factor Tu (394 aa).

The region spanning 10–205 (KPHVNIGTIG…VDTWIPLPPR (196 aa)) is the tr-type G domain. The G1 stretch occupies residues 19 to 26 (GHVDHGKT). A GTP-binding site is contributed by 19-26 (GHVDHGKT). Thr-26 is a binding site for Mg(2+). The interval 60 to 64 (GITIN) is G2. The interval 81 to 84 (DCPG) is G3. Residues 81–85 (DCPGH) and 136–139 (NKCD) contribute to the GTP site. Residues 136-139 (NKCD) are G4. The segment at 174-176 (SAL) is G5.

Belongs to the TRAFAC class translation factor GTPase superfamily. Classic translation factor GTPase family. EF-Tu/EF-1A subfamily. As to quaternary structure, monomer.

It is found in the cytoplasm. It catalyses the reaction GTP + H2O = GDP + phosphate + H(+). Functionally, GTP hydrolase that promotes the GTP-dependent binding of aminoacyl-tRNA to the A-site of ribosomes during protein biosynthesis. The sequence is that of Elongation factor Tu from Phocaeicola vulgatus (strain ATCC 8482 / DSM 1447 / JCM 5826 / CCUG 4940 / NBRC 14291 / NCTC 11154) (Bacteroides vulgatus).